We begin with the raw amino-acid sequence, 269 residues long: Xyloglucan endotransglucosylase/hydrolase protein 24 (269 aa).

The first 21 residues, 1–21, serve as a signal peptide directing secretion; sequence MSPFKIFFFTTLLVAAFSVSA. Residues 22–212 enclose the GH16 domain; the sequence is ADFNTDVNVA…WSKAPFMASY (191 aa). Glu98 functions as the Nucleophile in the catalytic mechanism. The Proton donor role is filled by Glu102. Glu102 is a binding site for xyloglucan. N-linked (GlcNAc...) asparagine glycosylation is present at Asn106. Xyloglucan contacts are provided by residues 115–117, 125–127, 191–192, Gly196, and Arg256; these read HTN, DKE, and DW. Cysteines 251 and 265 form a disulfide.

The protein belongs to the glycosyl hydrolase 16 family. XTH group 2 subfamily. Contains at least one intrachain disulfide bond essential for its enzymatic activity. Post-translationally, N-glycosylated; essential for its enzymatic activity. As to expression, highly expressed. Predominantly expressed in stems. Expressed in shoot apical meristems, also found in seedlings and meristems.

The protein resides in the secreted. It localises to the cell wall. Its subcellular location is the extracellular space. The protein localises to the apoplast. It carries out the reaction breaks a beta-(1-&gt;4) bond in the backbone of a xyloglucan and transfers the xyloglucanyl segment on to O-4 of the non-reducing terminal glucose residue of an acceptor, which can be a xyloglucan or an oligosaccharide of xyloglucan.. In terms of biological role, catalyzes xyloglucan endohydrolysis (XEH) and/or endotransglycosylation (XET). Cleaves and religates xyloglucan polymers, an essential constituent of the primary cell wall, and thereby participates in cell wall construction of growing tissues. May be required during development to modify the walls of cells under mechanical stress. The chain is Xyloglucan endotransglucosylase/hydrolase protein 24 (XTH24) from Arabidopsis thaliana (Mouse-ear cress).